The chain runs to 299 residues: UDP-N-acetylenolpyruvoylglucosamine reductase (299 aa).

The region spanning 19–192 is the FAD-binding PCMH-type domain; that stretch reads LGGQALAEVR…AAVTLQLRRS (174 aa). Arginine 169 is a catalytic residue. Residue cysteine 221 is the Proton donor of the active site. Glutamate 292 is a catalytic residue.

The protein belongs to the MurB family. It depends on FAD as a cofactor.

Its subcellular location is the cytoplasm. It carries out the reaction UDP-N-acetyl-alpha-D-muramate + NADP(+) = UDP-N-acetyl-3-O-(1-carboxyvinyl)-alpha-D-glucosamine + NADPH + H(+). It functions in the pathway cell wall biogenesis; peptidoglycan biosynthesis. In terms of biological role, cell wall formation. This Oleidesulfovibrio alaskensis (strain ATCC BAA-1058 / DSM 17464 / G20) (Desulfovibrio alaskensis) protein is UDP-N-acetylenolpyruvoylglucosamine reductase.